The sequence spans 291 residues: U3 small nucleolar ribonucleoprotein protein IMP4 (291 aa).

The region spanning 83-264 (PKVMITTSRD…LYMIRLGTLE (182 aa)) is the Brix domain.

Part of the small subunit (SSU) processome, composed of more than 70 proteins and the RNA chaperone small nucleolar RNA (snoRNA) U3. Component of a heterotrimeric complex containing IMP3, IMP4 and MPHOSPH10. Interacts with MPHOSPH10.

It is found in the nucleus. The protein resides in the nucleolus. Component of the 60-80S U3 small nucleolar ribonucleoprotein (U3 snoRNP). Required for the early cleavages during pre-18S ribosomal RNA processing. Part of the small subunit (SSU) processome, first precursor of the small eukaryotic ribosomal subunit. During the assembly of the SSU processome in the nucleolus, many ribosome biogenesis factors, an RNA chaperone and ribosomal proteins associate with the nascent pre-rRNA and work in concert to generate RNA folding, modifications, rearrangements and cleavage as well as targeted degradation of pre-ribosomal RNA by the RNA exosome. The protein is U3 small nucleolar ribonucleoprotein protein IMP4 of Homo sapiens (Human).